Here is a 1456-residue protein sequence, read N- to C-terminus: ABC-type transporter eriD (1456 aa).

The interval 1–65 (MAENEKVTYG…DPRMDPLSGK (65 aa)) is disordered. The segment covering 30–40 (SMTNASRSSVY) has biased composition (polar residues). An ABC transporter 1 domain is found at 118–372 (LDIPGLARDI…FIDMGFECPP (255 aa)). 6 consecutive transmembrane segments (helical) span residues 481-501 (NFLT…SIFY), 515-535 (ALLF…ILQI), 561-581 (VLCD…VLYF), 590-610 (GAFF…SMIF), 623-643 (AMAP…FTIP), and 734-754 (ILFG…EFIA). The interval 775-799 (EGASEDEEAGTGSTGTRTQEEPVDK) is disordered. The ABC transporter 2 domain occupies 813-1056 (FHWEDVIYDI…IIDYFEGQGA (244 aa)). Residue 849–856 (GASGAGKT) participates in ATP binding. 7 helical membrane passes run 1148–1168 (YIYS…FSFF), 1184–1204 (VFMG…HFVT), 1233–1253 (LPWN…PVGM), 1269–1289 (LMFL…HMLI), 1301–1321 (IASL…GPSG), 1337–1357 (PFTY…PAFC), and 1423–1443 (FGFL…FYWL).

This sequence belongs to the ABC transporter superfamily. ABCG family. PDR (TC 3.A.1.205) subfamily.

Its subcellular location is the membrane. In terms of biological role, ABC-type transporter; part of the gene cluster that mediates the biosynthesis of erinacines, cyathane-xylosides that show unique biological activities, including leishmanicidal activity, stimulating activity for nerve growth-factor synthesis, and agonistic activity toward the kappa opioid receptor. This is ABC-type transporter eriD from Hericium erinaceus (Lion's mane mushroom).